Reading from the N-terminus, the 397-residue chain is Succinate--CoA ligase [ADP-forming] subunit beta (397 aa).

Residues 9–254 (KALLREFGVP…ESEEDAKEIE (246 aa)) enclose the ATP-grasp domain. Residues K46, 53-55 (GRG), E109, S112, and E117 each bind ATP. Mg(2+)-binding residues include N209 and D223. Residues N274 and 331-333 (GIM) contribute to the substrate site.

Belongs to the succinate/malate CoA ligase beta subunit family. Heterotetramer of two alpha and two beta subunits. Mg(2+) serves as cofactor.

It carries out the reaction succinate + ATP + CoA = succinyl-CoA + ADP + phosphate. The enzyme catalyses GTP + succinate + CoA = succinyl-CoA + GDP + phosphate. Its pathway is carbohydrate metabolism; tricarboxylic acid cycle; succinate from succinyl-CoA (ligase route): step 1/1. Succinyl-CoA synthetase functions in the citric acid cycle (TCA), coupling the hydrolysis of succinyl-CoA to the synthesis of either ATP or GTP and thus represents the only step of substrate-level phosphorylation in the TCA. The beta subunit provides nucleotide specificity of the enzyme and binds the substrate succinate, while the binding sites for coenzyme A and phosphate are found in the alpha subunit. The polypeptide is Succinate--CoA ligase [ADP-forming] subunit beta (Nitrobacter hamburgensis (strain DSM 10229 / NCIMB 13809 / X14)).